The sequence spans 420 residues: MASSSVPPATAPAAAGGPGPGFGFASKTKKKHFVQQKVKVFRAADPLVGVFLWGVAHSINELSQVPPPVMLLPDDFKASSKIKVNNHLFHRENLPSHFKFKEYCPQVFRNLRDRFAIDDHDYLVSLTRSPPSETEGSDGRFLISYDRTLVIKEVSSEDIADMHSNLSNYHQYIVKCHGNTLLPQFLGMYRVSVENEDSYMLVMRNMFSHRLPVHRKYDLKGSLVSREASDKEKVKELPTLKDMDFLNKNQKVYIGEEEKKVFLEKLKRDVEFLVQLKIMDYSLLLGIHDIIRGSEPEEEGPVREEESEWDGDCNLTGPPALVGSYGTSPEGIGGYIHSHRPLGPGEFESFIDVYAIRSAEGAPEGGVFHGLIDILTQYDAKKKAAHAAKTVKHGAGAEISTVHPEQYAKRFLDFISNIFA.

The residue at position 2 (Ala-2) is an N-acetylalanine. At Ser-26 the chain carries Phosphoserine. Residues Ala-43–Phe-419 enclose the PIPK domain. Residues Val-69–Asp-75 are required for interaction with PIP5K1A. Ser-349 carries the post-translational modification Phosphoserine.

As to quaternary structure, interacts with PIP5K1A; the interaction inhibits PIP5K1A kinase activity. Post-translationally, phosphorylated, phosphorylation is induced by EGF. As to expression, widely expressed, with the most abundant expression in kidney.

It is found in the endoplasmic reticulum. The protein resides in the cytoplasm. It carries out the reaction a 1,2-diacyl-sn-glycero-3-phospho-(1D-myo-inositol-5-phosphate) + ATP = a 1,2-diacyl-sn-glycero-3-phospho-(1D-myo-inositol-4,5-bisphosphate) + ADP + H(+). It catalyses the reaction 1,2-dihexadecanoyl-sn-glycero-3-phospho-(1D-myo-inositol-5-phosphate) + ATP = 1,2-dihexadecanoyl-sn-glycero-3-phospho-(1D-myo-inositol-4,5-bisphosphate) + ADP + H(+). The catalysed reaction is 1,2-dihexadecanoyl-sn-glycero-3-phospho-(1D-myo-inositol-5-phosphate) + GTP = 1,2-dihexadecanoyl-sn-glycero-3-phospho-(1D-myo-inositol-4,5-bisphosphate) + GDP + H(+). Functionally, phosphatidylinositol 5-phosphate 4-kinase with low enzymatic activity. May be a GTP sensor, has higher GTP-dependent kinase activity than ATP-dependent kinase activity. PIP4Ks negatively regulate insulin signaling through a catalytic-independent mechanism. They interact with PIP5Ks and suppress PIP5K-mediated PtdIns(4,5)P2 synthesis and insulin-dependent conversion to PtdIns(3,4,5)P3. The protein is Phosphatidylinositol 5-phosphate 4-kinase type-2 gamma of Rattus norvegicus (Rat).